The primary structure comprises 605 residues: Leucine-rich repeat-containing protein 40 (605 aa).

The tract at residues 1–26 is disordered; the sequence is MSRFRRGGKAPDPLSGFRAPKEQEPA. LRR repeat units lie at residues 83 to 104, 106 to 127, 129 to 151, 152 to 173, 175 to 196, 198 to 219, 221 to 242, 244 to 265, 266 to 287, 290 to 311, 313 to 335, 336 to 357, 429 to 450, 453 to 475, 476 to 497, 499 to 520, 522 to 543, 546 to 567, and 569 to 590; these read DLTK…ISLL, ALVV…IKEL, NLQK…QHLQ, NLKS…IGHL, ILEE…VGQL, GLVK…IGKM, NLKQ…VAGM, SLEQ…PFLT, KLKE…HLQN, SLSV…ISLL, GLER…GSLP, NLKS…ILNK, FITT…IVEM, SVCD…CMLL, KLTH…MEAM, RLQS…LYRI, TLET…QLIK, KLST…LGNC, and SLRA…ILAK.

The protein is Leucine-rich repeat-containing protein 40 (lrrc40) of Xenopus tropicalis (Western clawed frog).